The sequence spans 688 residues: G protein-coupled receptor kinase 3 (688 aa).

The N-terminal stretch occupies residues 1–190 (MADLEAVLAD…ELNIHLTMND (190 aa)). Residues 54 to 175 (TFDKIFNQRI…MESDKFTRFC (122 aa)) enclose the RGS domain. The Protein kinase domain maps to 191–453 (FSVHRIIGRG…AQELKTHDFF (263 aa)). Residues 197-205 (IGRGGFGEV) and K220 each bind ATP. The Proton acceptor role is filled by D317. The region spanning 454–521 (RGIDWQHVYL…VISERWQQEV (68 aa)) is the AGC-kinase C-terminal domain. Residues 558–652 (DCIVHGYMLK…WKKELTETFM (95 aa)) enclose the PH domain.

Belongs to the protein kinase superfamily. AGC Ser/Thr protein kinase family. GPRK subfamily. In terms of assembly, interacts with GIT1. In terms of processing, ubiquitinated. As to expression, ubiquitous; brain, spleen &gt; heart, lung &gt; kidney.

It localises to the postsynapse. The protein resides in the presynapse. The enzyme catalyses [beta-adrenergic receptor] + ATP = [beta-adrenergic receptor]-phosphate + ADP + H(+). Specifically phosphorylates the agonist-occupied form of the beta-adrenergic and closely related receptors. The chain is G protein-coupled receptor kinase 3 from Bos taurus (Bovine).